The primary structure comprises 244 residues: MAATCCWGRSGLSSLTRALLEAEKRQCRALVRTGKKPQGIRYLSSCGILASRCPKLPRPASPAHIQGRTFLNLAAPLLGSKRIEYSESKVLGFSIEQMYDIVADVQNYKIFVPWCNRSKVLSCKKGVTRAELEVGFPPVVERYVSEISVIPLHQVRAVCCDGKLFNHLETVWRFSPGLSGRPDTCTLDFCVSFEFKSLLHSHLASVFFDEVVKQMVCAFEKQAGRIYGRQEVPLAAAAKLRAMR.

Belongs to the COQ10 family. Interacts with coenzyme Q.

The protein localises to the mitochondrion inner membrane. Required for the function of coenzyme Q in the respiratory chain. May serve as a chaperone or may be involved in the transport of Q6 from its site of synthesis to the catalytic sites of the respiratory complexes. This is Coenzyme Q-binding protein COQ10 homolog B, mitochondrial (coq10b) from Xenopus laevis (African clawed frog).